The chain runs to 94 residues: Pyrimidine/purine nucleoside phosphorylase (94 aa).

The protein belongs to the nucleoside phosphorylase PpnP family.

It catalyses the reaction a purine D-ribonucleoside + phosphate = a purine nucleobase + alpha-D-ribose 1-phosphate. It carries out the reaction adenosine + phosphate = alpha-D-ribose 1-phosphate + adenine. The catalysed reaction is cytidine + phosphate = cytosine + alpha-D-ribose 1-phosphate. The enzyme catalyses guanosine + phosphate = alpha-D-ribose 1-phosphate + guanine. It catalyses the reaction inosine + phosphate = alpha-D-ribose 1-phosphate + hypoxanthine. It carries out the reaction thymidine + phosphate = 2-deoxy-alpha-D-ribose 1-phosphate + thymine. The catalysed reaction is uridine + phosphate = alpha-D-ribose 1-phosphate + uracil. The enzyme catalyses xanthosine + phosphate = alpha-D-ribose 1-phosphate + xanthine. In terms of biological role, catalyzes the phosphorolysis of diverse nucleosides, yielding D-ribose 1-phosphate and the respective free bases. Can use uridine, adenosine, guanosine, cytidine, thymidine, inosine and xanthosine as substrates. Also catalyzes the reverse reactions. This Pseudomonas fluorescens (strain ATCC BAA-477 / NRRL B-23932 / Pf-5) protein is Pyrimidine/purine nucleoside phosphorylase.